The chain runs to 636 residues: Protein meg-1 (636 aa).

Polar residues-rich tracts occupy residues 1 to 13, 38 to 54, and 292 to 355; these read MDNRGHFSSNGNF, SSGNMRSIGGSAQNQQQ, and LSMN…QYNH. Disordered stretches follow at residues 1-54, 289-367, 484-504, and 521-542; these read MDNR…NQQQ, LFNL…APHL, SDVAREDASTSQPSKSRSMYI, and LDSSQSHAGPVPAASTKPKTPS. S574 bears the Phosphoserine; by mbk-2 mark. Residues 591 to 636 form a disordered region; that stretch reads MSQSFLHQQDDEAPDCTKNVHSESDLKQAEPQESDKQSDKELPSNE. Positions 608–636 are enriched in basic and acidic residues; sequence KNVHSESDLKQAEPQESDKQSDKELPSNE.

As to quaternary structure, interacts with pptr-1, pptr-2 and pgl-1. Phosphorylated by mbk-2, which promotes the disassembly of zygotic P granules in the anterior cytoplasm of pre-gastrulation embryos. Dephosphorylated by a phosphatase complex containing the PP2A regulatory subunit pptr-1, which promotes the assembly and accumulation of zygotic P granules in the posterior cytoplasm of pre-gastrulation embryos. In terms of tissue distribution, not expressed in the adult germline or in any somatic tissues.

Its subcellular location is the cytoplasmic granule. Its function is as follows. P granule component, which acts redundantly with P granule component meg-2 to promote P granule segregation during embryogenesis, and germ cell proliferation and differentiation in larval stages. In its phosphorylated form, and together with meg-2, promotes the disassembly of zygotic P granules in the anterior cytoplasm of pre-gastrulation embryos. In its dephosphorylated form, and together with meg-2, promotes the assembly and accumulation of zygotic P granules in the posterior cytoplasm of pre-gastrulation embryos. May function with the nanos family members nos-2 and nos-3 to promote germ cell proliferation during larval development. Required for fertility. The chain is Protein meg-1 from Caenorhabditis elegans.